The chain runs to 213 residues: Glycerol-3-phosphate acyltransferase (213 aa).

A run of 6 helical transmembrane segments spans residues 3 to 23 (ILLL…LWIG), 55 to 75 (ITFL…IWLG), 80 to 100 (SPLI…FTGF), 110 to 130 (AGVL…VFAL), 142 to 162 (SITA…IHFL), and 163 to 183 (LDGY…VIIF).

The protein belongs to the PlsY family. Probably interacts with PlsX.

The protein resides in the cell membrane. It carries out the reaction an acyl phosphate + sn-glycerol 3-phosphate = a 1-acyl-sn-glycero-3-phosphate + phosphate. The protein operates within lipid metabolism; phospholipid metabolism. Its function is as follows. Catalyzes the transfer of an acyl group from acyl-phosphate (acyl-PO(4)) to glycerol-3-phosphate (G3P) to form lysophosphatidic acid (LPA). This enzyme utilizes acyl-phosphate as fatty acyl donor, but not acyl-CoA or acyl-ACP. The polypeptide is Glycerol-3-phosphate acyltransferase (Streptococcus thermophilus (strain CNRZ 1066)).